Consider the following 62-residue polypeptide: Alpha-elapitoxin-Pc1 (62 aa).

4 cysteine pairs are disulfide-bonded: cysteine 3–cysteine 24, cysteine 17–cysteine 41, cysteine 43–cysteine 54, and cysteine 55–cysteine 60.

This sequence belongs to the three-finger toxin family. Short-chain subfamily. Type I alpha-neurotoxin sub-subfamily. Expressed by the venom gland.

It is found in the secreted. In terms of biological role, bird-specific neurotoxin (tested on chicken) that acts as pseudo-irreversible antagonists at the nicotinic acetylcholine receptor (nAChR) of the skeletal neuromuscular junction. Has no significant effect on the electrically-induced twitches of the rat isolated phrenic nerve-diaphragm preparation. This is Alpha-elapitoxin-Pc1 from Pseudechis colletti (Collett's snake).